We begin with the raw amino-acid sequence, 152 residues long: Transcriptional repressor NrdR (152 aa).

A zinc finger spans residues 3 to 34; sequence CCYCGHGESKVLETRSAEEGRVIRRRRECMEC. One can recognise an ATP-cone domain in the interval 49-139; it reads LIVRKKGGSL…VYRQFTDVGR (91 aa).

The protein belongs to the NrdR family. Zn(2+) is required as a cofactor.

Functionally, negatively regulates transcription of bacterial ribonucleotide reductase nrd genes and operons by binding to NrdR-boxes. The chain is Transcriptional repressor NrdR from Heliobacterium modesticaldum (strain ATCC 51547 / Ice1).